Here is a 141-residue protein sequence, read N- to C-terminus: Ly6/PLAUR domain-containing protein 1 (141 aa).

An N-terminal signal peptide occupies residues 1–20 (MWVLGIAATFCGLFLLPGFA). 6 disulfides stabilise this stretch: Cys-25–Cys-54, Cys-28–Cys-37, Cys-46–Cys-71, Cys-77–Cys-100, Cys-88–Cys-97, and Cys-101–Cys-106. One can recognise a UPAR/Ly6 domain in the interval 25–107 (CYQCEEFQLN…ISCCNTPLCN (83 aa)). The N-linked (GlcNAc...) asparagine glycan is linked to Asn-45. Ser-117 carries GPI-anchor amidated serine lipidation. The propeptide at 118–141 (ASALRPGLRTTILFLKLALFSAHC) is removed in mature form.

Interacts with CHRNA4 and nAChRs containing alpha-4:beta-2 (CHRNA4:CHRNB2) and alpha-7 (CHRNA7) subunits.

It localises to the cell membrane. Functionally, believed to act as a modulator of nicotinic acetylcholine receptors (nAChRs) activity. In vitro increases receptor desensitization and decreases affinity for ACh of alpha-4:beta-2-containing nAChRs. May play a role in the intracellular trafficking of alpha-4:beta-2 and alpha-7-containing nAChRs and may inhibit their expression at the cell surface. May be involved in the control of anxiety. The polypeptide is Ly6/PLAUR domain-containing protein 1 (LYPD1) (Homo sapiens (Human)).